We begin with the raw amino-acid sequence, 742 residues long: 5-methyltetrahydropteroyltriglutamate--homocysteine methyltransferase (742 aa).

Residues 18-21 (REWK) and Lys112 contribute to the 5-methyltetrahydropteroyltri-L-glutamate site. L-homocysteine-binding positions include 420–422 (IGS) and Glu473. Residues 420–422 (IGS) and Glu473 contribute to the L-methionine site. A 5-methyltetrahydropteroyltri-L-glutamate-binding site is contributed by Trp550. Asp588 contributes to the L-homocysteine binding site. Asp588 provides a ligand contact to L-methionine. 5-methyltetrahydropteroyltri-L-glutamate is bound at residue Glu594. The Zn(2+) site is built by His630, Cys632, and Glu654. Catalysis depends on His683, which acts as the Proton donor. Residue Cys715 participates in Zn(2+) binding.

It belongs to the vitamin-B12 independent methionine synthase family. Zn(2+) serves as cofactor.

It catalyses the reaction 5-methyltetrahydropteroyltri-L-glutamate + L-homocysteine = tetrahydropteroyltri-L-glutamate + L-methionine. It participates in amino-acid biosynthesis; L-methionine biosynthesis via de novo pathway; L-methionine from L-homocysteine (MetE route): step 1/1. Its function is as follows. Catalyzes the transfer of a methyl group from 5-methyltetrahydrofolate to homocysteine resulting in methionine formation. The polypeptide is 5-methyltetrahydropteroyltriglutamate--homocysteine methyltransferase (Staphylococcus aureus (strain MRSA252)).